A 344-amino-acid polypeptide reads, in one-letter code: Glycerol-3-phosphate dehydrogenase [NAD(P)+] (344 aa).

4 residues coordinate NADPH: S23, W24, R44, and K118. Sn-glycerol 3-phosphate-binding residues include K118, G147, and T149. A151 serves as a coordination point for NADPH. Positions 202, 255, 265, 266, and 267 each coordinate sn-glycerol 3-phosphate. K202 serves as the catalytic Proton acceptor. NADPH is bound at residue R266. E292 is an NADPH binding site.

This sequence belongs to the NAD-dependent glycerol-3-phosphate dehydrogenase family.

It localises to the cytoplasm. The enzyme catalyses sn-glycerol 3-phosphate + NAD(+) = dihydroxyacetone phosphate + NADH + H(+). It catalyses the reaction sn-glycerol 3-phosphate + NADP(+) = dihydroxyacetone phosphate + NADPH + H(+). The protein operates within membrane lipid metabolism; glycerophospholipid metabolism. Catalyzes the reduction of the glycolytic intermediate dihydroxyacetone phosphate (DHAP) to sn-glycerol 3-phosphate (G3P), the key precursor for phospholipid synthesis. The chain is Glycerol-3-phosphate dehydrogenase [NAD(P)+] from Nitrosococcus oceani (strain ATCC 19707 / BCRC 17464 / JCM 30415 / NCIMB 11848 / C-107).